Consider the following 196-residue polypeptide: Imidazole glycerol phosphate synthase subunit HisH (196 aa).

The region spanning 2–196 (KVVILDTGCA…AQLLKNFLEM (195 aa)) is the Glutamine amidotransferase type-1 domain. Residue Cys-77 is the Nucleophile of the active site. Residues His-178 and Glu-180 contribute to the active site.

In terms of assembly, heterodimer of HisH and HisF.

Its subcellular location is the cytoplasm. The enzyme catalyses 5-[(5-phospho-1-deoxy-D-ribulos-1-ylimino)methylamino]-1-(5-phospho-beta-D-ribosyl)imidazole-4-carboxamide + L-glutamine = D-erythro-1-(imidazol-4-yl)glycerol 3-phosphate + 5-amino-1-(5-phospho-beta-D-ribosyl)imidazole-4-carboxamide + L-glutamate + H(+). The catalysed reaction is L-glutamine + H2O = L-glutamate + NH4(+). It participates in amino-acid biosynthesis; L-histidine biosynthesis; L-histidine from 5-phospho-alpha-D-ribose 1-diphosphate: step 5/9. IGPS catalyzes the conversion of PRFAR and glutamine to IGP, AICAR and glutamate. The HisH subunit catalyzes the hydrolysis of glutamine to glutamate and ammonia as part of the synthesis of IGP and AICAR. The resulting ammonia molecule is channeled to the active site of HisF. The protein is Imidazole glycerol phosphate synthase subunit HisH of Pectobacterium atrosepticum (strain SCRI 1043 / ATCC BAA-672) (Erwinia carotovora subsp. atroseptica).